The primary structure comprises 305 residues: tRNA pseudouridine synthase B (305 aa).

Catalysis depends on Asp-41, which acts as the Nucleophile.

This sequence belongs to the pseudouridine synthase TruB family. Type 1 subfamily.

It carries out the reaction uridine(55) in tRNA = pseudouridine(55) in tRNA. In terms of biological role, responsible for synthesis of pseudouridine from uracil-55 in the psi GC loop of transfer RNAs. The chain is tRNA pseudouridine synthase B from Prochlorococcus marinus (strain MIT 9301).